Consider the following 379-residue polypeptide: tRNA(Met) cytidine acetate ligase (379 aa).

ATP contacts are provided by residues 7-20, Gly100, Asn153, and Arg178; that span reads ITEY…HQYH.

This sequence belongs to the TmcAL family.

It is found in the cytoplasm. It carries out the reaction cytidine(34) in elongator tRNA(Met) + acetate + ATP = N(4)-acetylcytidine(34) in elongator tRNA(Met) + AMP + diphosphate. Its function is as follows. Catalyzes the formation of N(4)-acetylcytidine (ac(4)C) at the wobble position of elongator tRNA(Met), using acetate and ATP as substrates. First activates an acetate ion to form acetyladenylate (Ac-AMP) and then transfers the acetyl group to tRNA to form ac(4)C34. The sequence is that of tRNA(Met) cytidine acetate ligase from Staphylococcus aureus (strain Mu3 / ATCC 700698).